A 514-amino-acid polypeptide reads, in one-letter code: Nucleus accumbens-associated protein 1 (514 aa).

Residues 30–94 (CDVSVVVKGH…CYTGRLSMNM (65 aa)) form the BTB domain. A Glycyl lysine isopeptide (Lys-Gly) (interchain with G-Cter in SUMO1); alternate cross-link involves residue Lys-167. A Glycyl lysine isopeptide (Lys-Gly) (interchain with G-Cter in SUMO2); alternate cross-link involves residue Lys-167. Lys-182 is covalently cross-linked (Glycyl lysine isopeptide (Lys-Gly) (interchain with G-Cter in SUMO2)). Disordered regions lie at residues 183-218 (RLWD…NRMP) and 241-279 (GPSM…EEGT). Ser-187 carries the post-translational modification Phosphoserine. The segment covering 242–251 (PSMSERTSPG) has biased composition (polar residues). Residue Ser-245 is modified to Phosphoserine; by PKC. Positions 252 to 264 (TSSAYTSDSPSSY) are enriched in low complexity. The span at 267–279 (EEDEEEDAGEEGT) shows a compositional bias: acidic residues. Residues Lys-304, Lys-438, Lys-466, and Lys-485 each participate in a glycyl lysine isopeptide (Lys-Gly) (interchain with G-Cter in SUMO2) cross-link. The region spanning 360–457 (GTNVYITRAQ…DMCTNARRVV (98 aa)) is the BEN domain. Residues Ser-492 and Ser-496 each carry the phosphoserine modification.

In terms of assembly, homooligomer; mediated by the BTB domain. Both isoforms interact with HDAC3 and HDAC4. Interacts (via BTB domain) with CUL3, PSMD7 and RCOR1. Phosphorylated by protein kinase C (PKC). As to expression, highly expressed in the hippocampus, brain cortex, cerebellum and brainstem. Expressed in the nucleus accumbens, olfactory tubercle, the striatum, frontal and parietal cortex and ventral pallidum. Weakly expressed in the heart, liver, kidney, spleen, testis, and skeletal muscle. Isoform 2 is expressed in the brain and liver, less abundantly expressed in the brain than isoform 1.

It localises to the nucleus. It is found in the cytoplasm. Functionally, functions as a transcriptional repressor. Isoform 1 is a stronger transcriptional repressor than isoform 2. Seems to function as a transcriptional corepressor in neuronal cells through recruitment of HDAC3 and HDAC4. Contributes to tumor progression, and tumor cell proliferation and survival. This may be mediated at least in part through repressing transcriptional activity of GADD45GIP1. Required for recruiting the proteasome from the nucleus to the cytoplasm and dendritic spines. The chain is Nucleus accumbens-associated protein 1 (Nacc1) from Rattus norvegicus (Rat).